A 212-amino-acid polypeptide reads, in one-letter code: Adenylate kinase (212 aa).

10–15 serves as a coordination point for ATP; it reads GAGKGT. The tract at residues 30–59 is NMP; sequence STGDMFRAAMANQTEMGRLAKSYIDKGELV. Residues threonine 31, arginine 36, 57–59, 86–89, and glutamine 93 each bind AMP; these read ELV and GYPR. Positions 127–159 are LID; sequence GRIINRKTGETFHKVFNPPVDYKEEDYYQREDD. ATP contacts are provided by residues arginine 128 and 137-138; that span reads TF. Residues arginine 156 and arginine 167 each contribute to the AMP site. Glutamine 195 is an ATP binding site.

Belongs to the adenylate kinase family. As to quaternary structure, monomer.

Its subcellular location is the cytoplasm. The enzyme catalyses AMP + ATP = 2 ADP. It participates in purine metabolism; AMP biosynthesis via salvage pathway; AMP from ADP: step 1/1. Functionally, catalyzes the reversible transfer of the terminal phosphate group between ATP and AMP. Plays an important role in cellular energy homeostasis and in adenine nucleotide metabolism. This Streptococcus pyogenes serotype M5 (strain Manfredo) protein is Adenylate kinase.